Reading from the N-terminus, the 150-residue chain is Snaclec bothrojaracin subunit beta (150 aa).

Positions 1–23 (MGRFIFVSFGLLVVFLSLSGTAA) are cleaved as a signal peptide. 3 disulfide bridges follow: C25/C36, C53/C146, and C123/C138. The C-type lectin domain occupies 32–147 (YEGSCYRVFE…CTKLEYFVCE (116 aa)).

The protein belongs to the snaclec family. Heterodimer of subunits alpha and beta; disulfide-linked. As to expression, expressed by the venom gland.

Its subcellular location is the secreted. Functionally, this potent antithrombotic agent acts in a calcium-independent manner. Exerts its anticoagulant effect by two distinct mechanisms. It binds to activated thrombin through exosite 1, blocking fibrinogen clotting, platelet activation, factor V activation and other effects, and it interacts with prothrombin (F2), decreasing its proteolytic activation -especially in the presence of factor Va. In vivo, intravenous injection before thrombosis induction causes a significant decrease in thrombus weight. Furthermore, BJC shows a prolonged effect by remaining in the plasma bound to prothrombin for at least 12 hours. In Bothrops jararaca (Jararaca), this protein is Snaclec bothrojaracin subunit beta.